Reading from the N-terminus, the 118-residue chain is Protein TusC (118 aa).

This sequence belongs to the DsrF/TusC family. Heterohexamer, formed by a dimer of trimers. The hexameric TusBCD complex contains 2 copies each of TusB, TusC and TusD. The TusBCD complex interacts with TusE.

The protein localises to the cytoplasm. Part of a sulfur-relay system required for 2-thiolation of 5-methylaminomethyl-2-thiouridine (mnm(5)s(2)U) at tRNA wobble positions. This Salmonella typhi protein is Protein TusC.